A 312-amino-acid chain; its full sequence is uncharacterized protein (312 aa).

The protein belongs to the asfivirus CP312R family.

Its subcellular location is the virion. This is an uncharacterized protein from African swine fever virus (isolate Warthog/Namibia/Wart80/1980) (ASFV).